Reading from the N-terminus, the 367-residue chain is AdoMet-dependent heme synthase (367 aa).

The Radical SAM core domain maps to 15–238 (DGSPTCKLIA…TSMHLKATCA (224 aa)). Residues cysteine 31, cysteine 35, and cysteine 38 each coordinate [4Fe-4S] cluster.

This sequence belongs to the radical SAM superfamily. [4Fe-4S] cluster serves as cofactor.

It catalyses the reaction Fe-coproporphyrin III + 2 S-adenosyl-L-methionine = heme b + 2 5'-deoxyadenosine + 2 L-methionine + 2 CO2. Its pathway is porphyrin-containing compound metabolism; protoheme biosynthesis. Involved in siroheme-dependent heme b biosynthesis. Catalyzes the conversion of Fe-coproporphyrin III into heme by the oxidative decarboxylation of two propionate side chains. The chain is AdoMet-dependent heme synthase from Nitratidesulfovibrio vulgaris (strain ATCC 29579 / DSM 644 / CCUG 34227 / NCIMB 8303 / VKM B-1760 / Hildenborough) (Desulfovibrio vulgaris).